The chain runs to 172 residues: Neudesin (172 aa).

An N-terminal signal peptide occupies residues 1–31 (MVGPAPRRRLRPLAALALVLALAPGLPTARA). Residues 44-129 (VRLFTEEELA…KELEALDEVF (86 aa)) form the Cytochrome b5 heme-binding domain. K136 carries the post-translational modification N6-acetyllysine. Residues 151–172 (DGSPNLDFKPEDQPHFDIKDEF) form a disordered region. Basic and acidic residues predominate over residues 158-172 (FKPEDQPHFDIKDEF).

This sequence belongs to the cytochrome b5 family. MAPR subfamily. In terms of assembly, interacts with PINK1 and PARK7. As to expression, ubiquitously expressed with high expression in heart. Over-expressed in various tumors including carcinomas of the uterine cervix, lymphoma, colon, lung, skin and leukemia, as well as carcinoma of the breast.

The protein resides in the secreted. It is found in the extracellular space. Its subcellular location is the mitochondrion. It localises to the endoplasmic reticulum. In terms of biological role, acts as a neurotrophic factor in postnatal mature neurons enhancing neuronal survival. Promotes cell proliferation and neurogenesis in undifferentiated neural progenitor cells at the embryonic stage and inhibits differentiation of astrocytes. Its neurotrophic activity is exerted via MAPK1/ERK2, MAPK3/ERK1 and AKT1/AKT pathways. Neurotrophic activity is enhanced by binding to heme. Also acts as an anorexigenic neurotrophic factor that contributes to energy balance. The protein is Neudesin of Homo sapiens (Human).